The sequence spans 66 residues: Conotoxin Cal5.2 (66 aa).

The N-terminal stretch at 1–20 is a signal peptide; the sequence is MMYCLPVVCILLLLIPSSAT. Positions 21–51 are excised as a propeptide; that stretch reads FVVESRLEKDQAQSFTGDAWKRVSPIHEMIQ. Val65 carries the post-translational modification Valine amide.

It belongs to the conotoxin T superfamily. In terms of processing, contains 2 disulfide bonds that can be either 'C1-C3, C2-C4' or 'C1-C4, C2-C3', since these disulfide connectivities have been observed for conotoxins with cysteine framework V (for examples, see AC P0DQQ7 and AC P81755). In terms of tissue distribution, expressed by the venom duct.

Its subcellular location is the secreted. Probable neurotoxin with unknown target. Possibly targets ion channels. In Californiconus californicus (California cone), this protein is Conotoxin Cal5.2.